The following is a 725-amino-acid chain: Consortin (725 aa).

Disordered stretches follow at residues 1 to 72 (MDDS…LNNN), 103 to 124 (GKDKKIPGKRSPRSKKGTAKKI), 296 to 353 (LLVS…SLSV), 375 to 397 (TQSSETAGSPSGPDSSEDACEDD), and 485 to 510 (QQPDLTDSDGKSPQAQADSDGSENVL). Topologically, residues 1-664 (MDDSDTPTYY…LDQDEVGGGS (664 aa)) are cytoplasmic. Residues 63 to 72 (VSEQDSLNNN) are compositionally biased toward polar residues. A compositionally biased stretch (basic residues) spans 109–121 (PGKRSPRSKKGTA). The span at 300 to 314 (EDPKEGGATTKESES) shows a compositional bias: basic and acidic residues. Composition is skewed to polar residues over residues 343–353 (DVQTDSPSLSV) and 375–388 (TQSSETAGSPSGPD). Residues 665 to 685 (CILLVLLCIATVFLSVGGTAL) form a helical membrane-spanning segment. Over 686–725 (YCTFGDMESPVCTDFADNMDFYYTKLLQGVAELKHWIYLS) the chain is Extracellular.

Belongs to the CNST family. Interacts with connexins GJA1/CX43, GJB1/CX32, GJB2/CX26, GJB3/CX31, GJB6/CX30 and GJC1/CX45. Also interacts with GGA1 and GGA2. Does not interact with PANX1.

The protein localises to the cell membrane. The protein resides in the golgi apparatus. It localises to the trans-Golgi network membrane. Its subcellular location is the cytoplasmic vesicle. It is found in the secretory vesicle. Its function is as follows. Required for targeting of connexins to the plasma membrane. The protein is Consortin (CNST) of Homo sapiens (Human).